We begin with the raw amino-acid sequence, 383 residues long: GTP-binding protein 10 (383 aa).

Positions 13 to 148 (GNFIDNLRIY…RIIHLDLKLI (136 aa)) constitute an Obg domain. In terms of domain architecture, OBG-type G spans 149-344 (SDVGLVGFPN…LIGCIRKTMD (196 aa)). Residues 155-162 (GFPNAGKS), 202-206 (DLPGL), and 278-281 (NKMD) contribute to the GTP site. Positions 362–383 (LQKETSRTVKRNLKNSPQRTHH) are disordered. Basic residues predominate over residues 369–383 (TVKRNLKNSPQRTHH).

It belongs to the TRAFAC class OBG-HflX-like GTPase superfamily. OBG GTPase family.

The protein resides in the nucleus. It localises to the nucleolus. May be involved in the ribosome maturation process. The sequence is that of GTP-binding protein 10 (gtpbp10) from Xenopus tropicalis (Western clawed frog).